An 85-amino-acid chain; its full sequence is MNYLVMISLALLFMTGVESLKDGYIVNDINCTYFCGRNAYCNELCIKLKGESGYCQWASPYGNSCYCYKLPDHVRTKGPGRCNDR.

The signal sequence occupies residues 1–19 (MNYLVMISLALLFMTGVES). The 63-residue stretch at 21-83 (KDGYIVNDIN…VRTKGPGRCN (63 aa)) folds into the LCN-type CS-alpha/beta domain. Intrachain disulfides connect Cys31-Cys82, Cys35-Cys55, Cys41-Cys65, and Cys45-Cys67. Residue Arg85 is a propeptide, removed by a carboxypeptidase.

This sequence belongs to the long (4 C-C) scorpion toxin superfamily. Sodium channel inhibitor family. Alpha subfamily. In terms of tissue distribution, expressed by the venom gland.

The protein localises to the secreted. In terms of biological role, alpha toxins bind voltage-independently at site-3 of sodium channels (Nav) and inhibit the inactivation of the activated channels, thereby blocking neuronal transmission. The toxin principally slows the inactivation process of TTX-sensitive sodium channels. It discriminates neuronal versus muscular sodium channel, as it is more potent on rat brain Nav1.2/SCN2A (EC(50)=29 nM) than on rat skeletal muscle Nav1.4/SCN4A (EC(50)=416 nM). It also shows a weak activity on Nav1.7/SCN9A (EC(50)=1.76 uM). In vivo, the toxin produces pain hypersensibility to mechanical and thermal stimuli. It also exhibits potent analgesic activity (when injected intraperitoneally), increasing hot plate and tail flick withdrawal latencies in a dose-dependent fashion. This paradoxical analgesic action, is significantly suppressed by opioid receptor antagonists, suggesting a pain-induced analgesia mechanism that involves an endogenous opioid system. This led to hypothesis that pain relief induced by peripheral administration of Amm VIII may result from sensitization of primary afferent neurons and subsequent activation of an opioid-dependent noxious inhibitory control. This is Alpha-toxin Amm8 from Androctonus mauritanicus mauritanicus (Scorpion).